The sequence spans 216 residues: Calcium-binding protein 2 (216 aa).

A disordered region spans residues 1 to 41 (MGNCAKTPWHRGSKERWQWPGSPLGGSRPSPGPRTEEQEGT). The N-myristoyl glycine moiety is linked to residue Gly-2. Low complexity predominate over residues 20–29 (PGSPLGGSRP). EF-hand domains lie at 74-109 (EEIEELQIAFQEFDRDRDGYIGYRELGACMRTLGYM), 125-142 (GKVDFEDFVELMGPKLLA), 148-183 (IGVRELRDAFREFDTNGDGCISVGELRAALKALLGE), and 185-216 (LSQREVDEILQDIDLNGDGLVDFEEFVRMMSR). Ca(2+) is bound by residues Asp-87, Asp-89, Asp-91, Tyr-93, and Glu-98. Positions 161, 163, 165, 167, 172, 198, 200, 202, and 209 each coordinate Ca(2+).

In terms of tissue distribution, expressed in the inner hair cells (IHCs), outer hair cells,(OHCs) and vestibular hair cells within the ear and in the retina (at protein level). Expressed in the retinal cone type 6 ON-bipolar cells and type 1 OFF-bipolar cells (at protein level). Expressed in the organ of Corti and spiral ganglion neurons in the cochlea (at protein level).

Its subcellular location is the cytoplasm. The protein localises to the perinuclear region. It is found in the cell membrane. It localises to the golgi apparatus. Its function is as follows. Required for sound encoding at inner hair cells (IHCs) synapses, likely via inhibition of the inactivation of voltage-gated calcium channel of type 1.3 (Cav1.3) in the IHCs. Required for the normal transfer of light signals through the retina. The sequence is that of Calcium-binding protein 2 (Cabp2) from Mus musculus (Mouse).